We begin with the raw amino-acid sequence, 123 residues long: UPF0102 protein PputW619_0932 (123 aa).

The protein belongs to the UPF0102 family.

The polypeptide is UPF0102 protein PputW619_0932 (Pseudomonas putida (strain W619)).